The primary structure comprises 643 residues: Threonine--tRNA ligase (643 aa).

A TGS domain is found at 3-64 (DMINITFPDG…QEDGAVEIIT (62 aa)). Residues 245–542 (DHRKLGKELK…LIEEHKGALP (298 aa)) form a catalytic region. Zn(2+)-binding residues include C338, H389, and H519.

It belongs to the class-II aminoacyl-tRNA synthetase family. Homodimer. It depends on Zn(2+) as a cofactor.

It localises to the cytoplasm. The catalysed reaction is tRNA(Thr) + L-threonine + ATP = L-threonyl-tRNA(Thr) + AMP + diphosphate + H(+). Catalyzes the attachment of threonine to tRNA(Thr) in a two-step reaction: L-threonine is first activated by ATP to form Thr-AMP and then transferred to the acceptor end of tRNA(Thr). Also edits incorrectly charged L-seryl-tRNA(Thr). The chain is Threonine--tRNA ligase from Bacillus velezensis (strain DSM 23117 / BGSC 10A6 / LMG 26770 / FZB42) (Bacillus amyloliquefaciens subsp. plantarum).